The following is an 80-amino-acid chain: Clavaspirin (80 aa).

The first 17 residues, 1-17 (MKTIILILLILGLGIDA), serve as a signal peptide directing secretion. Positions 18–29 (KSLEESKADEEK) are excised as a propeptide. A Leucine amide modification is found at Leu52. The propeptide occupies 53-80 (GDDQQDNGKFYGYYAEDNGKHWYDTGDQ).

Pharyngeal tissues and hemocytes.

It is found in the secreted. Its function is as follows. Exhibits broad-spectrum antimicrobial activity against both Gram-positive and Gram-negative bacteria. Has potent hemolytic activity. This Styela clava (Sea squirt) protein is Clavaspirin.